The sequence spans 442 residues: Glutamate synthase large subunit-like protein (442 aa).

The segment at 108 to 133 (LGRGATASGTSTTTGDGGMTDEERGH) is disordered. The segment covering 109–121 (GRGATASGTSTTT) has biased composition (low complexity).

The protein belongs to the glutamate synthase family.

The protein is Glutamate synthase large subunit-like protein (glxD) of Rhizobium meliloti (strain 1021) (Ensifer meliloti).